Here is a 172-residue protein sequence, read N- to C-terminus: Nicotinamide-nucleotide adenylyltransferase (172 aa).

This sequence belongs to the archaeal NMN adenylyltransferase family.

The protein resides in the cytoplasm. The catalysed reaction is beta-nicotinamide D-ribonucleotide + ATP + H(+) = diphosphate + NAD(+). Its pathway is cofactor biosynthesis; NAD(+) biosynthesis; NAD(+) from nicotinamide D-ribonucleotide: step 1/1. This is Nicotinamide-nucleotide adenylyltransferase from Methanococcus vannielii (strain ATCC 35089 / DSM 1224 / JCM 13029 / OCM 148 / SB).